Reading from the N-terminus, the 256-residue chain is MPRDNMASLIQRIARQACLTFRGSSTGSEGPAPGFPENLSLLKSLLTQVRAEDLNIAPRKALPQPLPRNLPPVTYMHIYETEGFSLGVFLLKSGTCIPLHDHPGMHGMLKVLYGTVRISCMDKLDTGAGHRRPPPEQQFEPPLQPLEREAVRPGVLRSRAEYTEASGPCVLTPHRDNLHQIDAVDGPAAFLDILAPPYDPEDGRDCHYYRVVEPIRPKEASGSACDLPREVWLLETPQADDFWCEGEPYPGPKVLP.

Fe cation contacts are provided by histidine 100, histidine 102, and histidine 179.

In terms of assembly, monomer. Fe cation is required as a cofactor. Ubiquitous, with highest expression in brain, heart and skeletal muscle (at protein level).

It catalyses the reaction cysteamine + O2 = hypotaurine + H(+). It carries out the reaction N-terminal L-cysteinyl-[protein] + O2 = N-terminal S-hydroxy-S-oxy-L-cysteinyl-[protein] + H(+). Its function is as follows. Plays a vital role in regulating thiol metabolism and preserving oxygen homeostasis by oxidizing the sulfur of cysteamine and N-terminal cysteine-containing proteins to their corresponding sulfinic acids using O2 as a cosubstrate. Catalyzes the oxidation of cysteamine (2-aminoethanethiol) to hypotaurine. Catalyzes the oxidation of the regulator of G-protein signaling 5 (RGS5). Also oxidizes proteins RGS4 and interleukin-32 (IL32). The sequence is that of 2-aminoethanethiol dioxygenase (Ado) from Mus musculus (Mouse).